Reading from the N-terminus, the 270-residue chain is Malonyl-[acyl-carrier protein] O-methyltransferase (270 aa).

Belongs to the methyltransferase superfamily.

The catalysed reaction is malonyl-[ACP] + S-adenosyl-L-methionine = malonyl-[ACP] methyl ester + S-adenosyl-L-homocysteine. The protein operates within cofactor biosynthesis; biotin biosynthesis. Functionally, converts the free carboxyl group of a malonyl-thioester to its methyl ester by transfer of a methyl group from S-adenosyl-L-methionine (SAM). It allows to synthesize pimeloyl-ACP via the fatty acid synthetic pathway. This Marinomonas sp. (strain MWYL1) protein is Malonyl-[acyl-carrier protein] O-methyltransferase.